The chain runs to 488 residues: Glutamyl-tRNA(Gln) amidotransferase subunit A (488 aa).

Active-site charge relay system residues include Lys77 and Ser152. Ser176 functions as the Acyl-ester intermediate in the catalytic mechanism.

It belongs to the amidase family. GatA subfamily. As to quaternary structure, heterotrimer of A, B and C subunits.

It catalyses the reaction L-glutamyl-tRNA(Gln) + L-glutamine + ATP + H2O = L-glutaminyl-tRNA(Gln) + L-glutamate + ADP + phosphate + H(+). Functionally, allows the formation of correctly charged Gln-tRNA(Gln) through the transamidation of misacylated Glu-tRNA(Gln) in organisms which lack glutaminyl-tRNA synthetase. The reaction takes place in the presence of glutamine and ATP through an activated gamma-phospho-Glu-tRNA(Gln). In Streptococcus pyogenes serotype M2 (strain MGAS10270), this protein is Glutamyl-tRNA(Gln) amidotransferase subunit A.